Here is a 335-residue protein sequence, read N- to C-terminus: Ornithine carbamoyltransferase (335 aa).

Carbamoyl phosphate contacts are provided by residues 57-60 (STRT), Arg-108, and 135-138 (HPTQ). Residues Asn-168, Asp-232, and 236–237 (SM) each bind L-ornithine. Carbamoyl phosphate-binding positions include 274–275 (CL) and Arg-319.

The protein belongs to the aspartate/ornithine carbamoyltransferase superfamily. OTCase family.

The protein resides in the cytoplasm. It carries out the reaction carbamoyl phosphate + L-ornithine = L-citrulline + phosphate + H(+). It functions in the pathway amino-acid degradation; L-arginine degradation via ADI pathway; carbamoyl phosphate from L-arginine: step 2/2. Functionally, reversibly catalyzes the transfer of the carbamoyl group from carbamoyl phosphate (CP) to the N(epsilon) atom of ornithine (ORN) to produce L-citrulline. This chain is Ornithine carbamoyltransferase, found in Limosilactobacillus reuteri (strain DSM 20016) (Lactobacillus reuteri).